The following is a 290-amino-acid chain: MQIKDLFSKKKYATIPSERPKRDIPEGLMNKCSKCGTIQYSKELDKNLKVCSSCGHHYRLSAWERIGMTLDDGRLYEYDADMESVDPLEFPGYKGKLEQQRQKNPNLREAVVTGEGTINGHPVVVAVMSFDFFSGSMGSVVGEKITRAIEAAHEKKLPLLIFSTSGGARMQESILSLMQMAKTSAALSMFQGAGGLFISVFTDPTMGGVSASFASLGDYNLAEPGALVGFAGRIVIEQTIRQKLPDNFQTAEFNMQHGQLDLVVHRKDMKTTLGKLLDMHTVREGLSHGG.

One can recognise a CoA carboxyltransferase N-terminal domain in the interval 28–290 (LMNKCSKCGT…TVREGLSHGG (263 aa)). Zn(2+) contacts are provided by Cys32, Cys35, Cys51, and Cys54. The segment at 32 to 54 (CSKCGTIQYSKELDKNLKVCSSC) adopts a C4-type zinc-finger fold.

It belongs to the AccD/PCCB family. In terms of assembly, acetyl-CoA carboxylase is a heterohexamer composed of biotin carboxyl carrier protein (AccB), biotin carboxylase (AccC) and two subunits each of ACCase subunit alpha (AccA) and ACCase subunit beta (AccD). The cofactor is Zn(2+).

It is found in the cytoplasm. The catalysed reaction is N(6)-carboxybiotinyl-L-lysyl-[protein] + acetyl-CoA = N(6)-biotinyl-L-lysyl-[protein] + malonyl-CoA. It participates in lipid metabolism; malonyl-CoA biosynthesis; malonyl-CoA from acetyl-CoA: step 1/1. In terms of biological role, component of the acetyl coenzyme A carboxylase (ACC) complex. Biotin carboxylase (BC) catalyzes the carboxylation of biotin on its carrier protein (BCCP) and then the CO(2) group is transferred by the transcarboxylase to acetyl-CoA to form malonyl-CoA. The polypeptide is Acetyl-coenzyme A carboxylase carboxyl transferase subunit beta (Paenibacillus sp. (strain JDR-2)).